The primary structure comprises 195 residues: ATP-dependent Clp protease proteolytic subunit 3 (195 aa).

Ser-97 serves as the catalytic Nucleophile. The active site involves His-122.

It belongs to the peptidase S14 family. As to quaternary structure, fourteen ClpP subunits assemble into 2 heptameric rings which stack back to back to give a disk-like structure with a central cavity, resembling the structure of eukaryotic proteasomes.

The protein resides in the cytoplasm. It carries out the reaction Hydrolysis of proteins to small peptides in the presence of ATP and magnesium. alpha-casein is the usual test substrate. In the absence of ATP, only oligopeptides shorter than five residues are hydrolyzed (such as succinyl-Leu-Tyr-|-NHMec, and Leu-Tyr-Leu-|-Tyr-Trp, in which cleavage of the -Tyr-|-Leu- and -Tyr-|-Trp bonds also occurs).. In terms of biological role, cleaves peptides in various proteins in a process that requires ATP hydrolysis. Has a chymotrypsin-like activity. Plays a major role in the degradation of misfolded proteins. The polypeptide is ATP-dependent Clp protease proteolytic subunit 3 (Rhizobium meliloti (strain 1021) (Ensifer meliloti)).